The primary structure comprises 554 residues: (E)-nerolidol synthase TPS18VF (554 aa).

Residues Arg276, Asp313, Asp317, Arg455, and Asp458 each coordinate (2E,6E)-farnesyl diphosphate. Asp313 and Asp317 together coordinate Mg(2+). The short motif at 313–317 (DDIFD) is the DDXXD motif element. Mg(2+) contacts are provided by Asp458, Ser462, and Glu466.

This sequence belongs to the terpene synthase family. Tpsb subfamily. It depends on Mg(2+) as a cofactor. Mn(2+) serves as cofactor. In terms of tissue distribution, highly expressed in glandular trichomes.

The catalysed reaction is (2E,6E)-farnesyl diphosphate + H2O = (6E)-nerolidol + diphosphate. It carries out the reaction (2E)-geranyl diphosphate + H2O = (S)-linalool + diphosphate. It participates in secondary metabolite biosynthesis; terpenoid biosynthesis. In terms of biological role, involved in sesquiterpene olefins biosynthesis, constituants of cannabinoids and terpenoids-rich resins. Catalyzes primarily the conversion of (2E)-farnesyl diphosphate to (E)-nerolidol, and the conversion of (2E)-geranyl diphosphate to (+)linalool. This chain is (E)-nerolidol synthase TPS18VF, found in Cannabis sativa (Hemp).